The primary structure comprises 528 residues: MSVAGAPESTFDTVLVVDFGAQYAQLIARRVRECHVYSEIVPPTMPVEEMLAKKPKAIILSGGPSSVYADGAPQAPPGLFDTGVPILGICYGFQVMAQTLGGTVERTGRSEYGRTTINVATDSLLFHSLPQQQTVWMSHGDAVSQVPDGFTVTGQTADAPVAAMEHRDRALYGVQFHPEVVHTEHGRAVLQHFLYEAAGCRPTWTMVNIVEDQVARIRAQIGSKRAICGLSGGVDSAVAAALVQRAIGDRLTCVFVDHGLLRQGEAEQVEKDFVAATGASLKVVDAQERFLTALAGVTDPETKRKIIGREFIRVFEQAAREIVAEAGEGDEAVEFLVQGTLYPDVVESGGGNGTANIKSHHNVGGLPDDLQFTLVEPLRELFKDEVRRVGEELGLPAEMVWRHPFPGPGLAIRIVGEVTAERLEILRAADAIVREELTRAGLDRAIWQCPVVLLADVRSVGVQGDGRTYGHPIVLRPVTSEDAMTADWARVPYDVLATISNRITNEVPDINRVTLDITSKPPGTIEWE.

Residues 13–203 (TVLVVDFGAQ…LYEAAGCRPT (191 aa)) form the Glutamine amidotransferase type-1 domain. The active-site Nucleophile is C90. Active-site residues include H177 and E179. The 199-residue stretch at 204 to 402 (WTMVNIVEDQ…LGLPAEMVWR (199 aa)) folds into the GMPS ATP-PPase domain. 231–237 (SGGVDSA) serves as a coordination point for ATP.

As to quaternary structure, homodimer.

The enzyme catalyses XMP + L-glutamine + ATP + H2O = GMP + L-glutamate + AMP + diphosphate + 2 H(+). Its pathway is purine metabolism; GMP biosynthesis; GMP from XMP (L-Gln route): step 1/1. Functionally, catalyzes the synthesis of GMP from XMP. The chain is GMP synthase [glutamine-hydrolyzing] from Thermobifida fusca (strain YX).